Here is a 268-residue protein sequence, read N- to C-terminus: Imidazole glycerol phosphate synthase subunit HisF (268 aa).

Catalysis depends on residues Asp-12 and Asp-131.

Belongs to the HisA/HisF family. As to quaternary structure, heterodimer of HisH and HisF.

The protein resides in the cytoplasm. The catalysed reaction is 5-[(5-phospho-1-deoxy-D-ribulos-1-ylimino)methylamino]-1-(5-phospho-beta-D-ribosyl)imidazole-4-carboxamide + L-glutamine = D-erythro-1-(imidazol-4-yl)glycerol 3-phosphate + 5-amino-1-(5-phospho-beta-D-ribosyl)imidazole-4-carboxamide + L-glutamate + H(+). Its pathway is amino-acid biosynthesis; L-histidine biosynthesis; L-histidine from 5-phospho-alpha-D-ribose 1-diphosphate: step 5/9. Functionally, IGPS catalyzes the conversion of PRFAR and glutamine to IGP, AICAR and glutamate. The HisF subunit catalyzes the cyclization activity that produces IGP and AICAR from PRFAR using the ammonia provided by the HisH subunit. The polypeptide is Imidazole glycerol phosphate synthase subunit HisF (Methanocorpusculum labreanum (strain ATCC 43576 / DSM 4855 / Z)).